The sequence spans 269 residues: 5'-nucleotidase SurE (269 aa).

4 residues coordinate a divalent metal cation: D11, D12, S43, and N101.

This sequence belongs to the SurE nucleotidase family. A divalent metal cation serves as cofactor.

The protein resides in the cytoplasm. It carries out the reaction a ribonucleoside 5'-phosphate + H2O = a ribonucleoside + phosphate. Its function is as follows. Nucleotidase that shows phosphatase activity on nucleoside 5'-monophosphates. In Prochlorococcus marinus (strain MIT 9211), this protein is 5'-nucleotidase SurE.